Reading from the N-terminus, the 738-residue chain is Eukaryotic translation initiation factor 3 subunit B (738 aa).

Positions 1–10 (MAPSFENLSE) are enriched in polar residues. Positions 1–20 (MAPSFENLSEQDLHEEEEEE) are disordered. Residues 40-126 (TFVVIDGLPV…HTLLVNKLMD (87 aa)) enclose the RRM domain. WD repeat units lie at residues 193-230 (AHWT…KQKQ), 232-289 (PHPF…RSFV), 301-342 (QPKK…LLGK), 454-494 (SLKD…SFFA), 511-554 (IEKK…EKND), and 569-607 (VDHY…HTFS). Residues 693–720 (EAYGLPEEADQPKAAKDAPTNTEDKGET) form a disordered region. Residues 702-720 (DQPKAAKDAPTNTEDKGET) show a composition bias toward basic and acidic residues.

It belongs to the eIF-3 subunit B family. Component of the eukaryotic translation initiation factor 3 (eIF-3) complex.

Its subcellular location is the cytoplasm. Its function is as follows. RNA-binding component of the eukaryotic translation initiation factor 3 (eIF-3) complex, which is involved in protein synthesis of a specialized repertoire of mRNAs and, together with other initiation factors, stimulates binding of mRNA and methionyl-tRNAi to the 40S ribosome. The eIF-3 complex specifically targets and initiates translation of a subset of mRNAs involved in cell proliferation. The protein is Eukaryotic translation initiation factor 3 subunit B (prt1) of Emericella nidulans (strain FGSC A4 / ATCC 38163 / CBS 112.46 / NRRL 194 / M139) (Aspergillus nidulans).